The sequence spans 351 residues: DNA polymerase IV (351 aa).

The UmuC domain maps to 4 to 185; it reads IIHVDMDCFF…LPLAKIPGVG (182 aa). Positions 8 and 103 each coordinate Mg(2+). The active site involves Glu104.

Belongs to the DNA polymerase type-Y family. As to quaternary structure, monomer. Mg(2+) serves as cofactor.

Its subcellular location is the cytoplasm. The enzyme catalyses DNA(n) + a 2'-deoxyribonucleoside 5'-triphosphate = DNA(n+1) + diphosphate. Functionally, poorly processive, error-prone DNA polymerase involved in untargeted mutagenesis. Copies undamaged DNA at stalled replication forks, which arise in vivo from mismatched or misaligned primer ends. These misaligned primers can be extended by PolIV. Exhibits no 3'-5' exonuclease (proofreading) activity. May be involved in translesional synthesis, in conjunction with the beta clamp from PolIII. The protein is DNA polymerase IV of Escherichia coli O9:H4 (strain HS).